Consider the following 147-residue polypeptide: Austinoid biosynthesis clusters protein H (147 aa).

The protein belongs to the trt14 isomerase family. As to quaternary structure, homodimer.

The protein operates within secondary metabolite biosynthesis; terpenoid biosynthesis. Part of the gene cluster B that mediates the biosynthesis of the fungal meroterpenoid acetoxydehydroaustin. The first step of the pathway is the synthesis of 3,5-dimethylorsellinic acid by the polyketide synthase ausA. 3,5-dimethylorsellinic acid is then prenylated by the polyprenyl transferase ausN. Further epoxidation by the FAD-dependent monooxygenase ausM and cyclization by the probable terpene cyclase ausL lead to the formation of protoaustinoid A. Protoaustinoid A is then oxidized to spiro-lactone preaustinoid A3 by the combined action of the FAD-binding monooxygenases ausB and ausC, and the dioxygenase ausE. Acid-catalyzed keto-rearrangement and ring contraction of the tetraketide portion of preaustinoid A3 by ausJ lead to the formation of preaustinoid A4. The aldo-keto reductase ausK, with the help of ausH, is involved in the next step by transforming preaustinoid A4 into isoaustinone which is in turn hydroxylated by the P450 monooxygenase ausI to form austinolide. The cytochrome P450 monooxygenase ausG then modifies austinolide to austinol. Austinol is further acetylated to austin by the O-acetyltransferase ausP, which spontaneously changes to dehydroaustin. The cytochrome P450 monooxygenase then converts dehydroaustin is into 7-dehydrodehydroaustin. The hydroxylation catalyzed by ausR permits the second O-acetyltransferase ausQ to add an additional acetyl group to the molecule, leading to the formation of acetoxydehydroaustin. Due to genetic rearrangements of the clusters and the subsequent loss of some enzymes, the end product of the Penicillium brasilianum austinoid biosynthesis clusters is acetoxydehydroaustin. The sequence is that of Austinoid biosynthesis clusters protein H from Penicillium brasilianum.